The sequence spans 287 residues: Large ribosomal subunit protein uL2 (287 aa).

Disordered regions lie at residues M1–E30 and N211–S287. A compositionally biased stretch (polar residues) spans G12–S22. Basic residues-rich tracts occupy residues N211–V220 and K258–S287.

Belongs to the universal ribosomal protein uL2 family. As to quaternary structure, part of the 50S ribosomal subunit. Forms a bridge to the 30S subunit in the 70S ribosome.

In terms of biological role, one of the primary rRNA binding proteins. Required for association of the 30S and 50S subunits to form the 70S ribosome, for tRNA binding and peptide bond formation. It has been suggested to have peptidyltransferase activity; this is somewhat controversial. Makes several contacts with the 16S rRNA in the 70S ribosome. This is Large ribosomal subunit protein uL2 from Cyanothece sp. (strain PCC 7425 / ATCC 29141).